A 308-amino-acid chain; its full sequence is Homogentisate phytyltransferase (308 aa).

The next 8 membrane-spanning stretches (helical) occupy residues 13 to 33 (PHTI…TILG), 44 to 64 (LDLV…IVGL), 104 to 124 (LAIA…SLII), 142 to 162 (AALC…FLFF), 173 to 193 (ITPI…IAIF), 219 to 241 (VFRG…GLWA), 245 to 263 (LNTA…LLWW), and 279 to 299 (FYQF…LALW).

The protein belongs to the UbiA prenyltransferase family.

Its subcellular location is the membrane. The catalysed reaction is phytyl diphosphate + homogentisate + H(+) = 2-methyl-6-phytyl-1,4-benzene-1,4-diol + CO2 + diphosphate. It functions in the pathway cofactor biosynthesis; tocopherol biosynthesis. Its function is as follows. Involved in the synthesis of tocopherol (vitamin E). Catalyzes the condensation of homogentisate and phytyl diphosphate to form dimethylphytylhydrquinone. The sequence is that of Homogentisate phytyltransferase from Synechocystis sp. (strain ATCC 27184 / PCC 6803 / Kazusa).